The following is a 787-amino-acid chain: Protocadherin beta-15 (787 aa).

The signal sequence occupies residues 1–26; that stretch reads MEPAGERFPEQRQVLILLLLLEVTLA. At 27–690 the chain is on the extracellular side; the sequence is GWEPRRYSVM…AQADSLTVYL (664 aa). Cadherin domains follow at residues 35 to 133, 138 to 242, 247 to 347, 352 to 451, and 456 to 561; these read VMEE…SPEF, ITLK…APEF, YEVQ…FPEL, LTSP…APAF, and YTLF…SPFV. 2 N-linked (GlcNAc...) asparagine glycosylation sites follow: asparagine 418 and asparagine 436. Asparagine 567 carries an N-linked (GlcNAc...) asparagine glycan. A Cadherin 6 domain is found at 568 to 671; it reads GSAPCTELVP…LVDGFSQPYL (104 aa). The helical transmembrane segment at 691–711 threads the bilayer; the sequence is VVALASVSSLFLFSVLLFVAV. Residues 712-787 are Cytoplasmic-facing; it reads RLCRRSRAAS…DSRRKSEFLE (76 aa).

The protein resides in the cell membrane. Potential calcium-dependent cell-adhesion protein. May be involved in the establishment and maintenance of specific neuronal connections in the brain. The polypeptide is Protocadherin beta-15 (PCDHB15) (Pan troglodytes (Chimpanzee)).